We begin with the raw amino-acid sequence, 204 residues long: Protein OPG030 (204 aa).

Positions 95–177 (FLRQYINNNI…ITYSELTNAI (83 aa)) constitute a BACK domain.

This sequence belongs to the orthopoxvirus OPG030 family.

The sequence is that of Protein OPG030 (OPG30) from Bos taurus (Bovine).